The chain runs to 299 residues: Nicotinate-nucleotide pyrophosphorylase [carboxylating] (299 aa).

The tract at residues 8–12 (HLLPP) is important for hexamer formation. Residues R102, 138–139 (RK), 160–161 (HR), K171, E201, D222, 248–250 (SGG), and G270 each bind quinolinate. At T291 the chain carries Phosphothreonine.

This sequence belongs to the NadC/ModD family. In terms of assembly, hexamer formed by 3 homodimers.

It carries out the reaction nicotinate beta-D-ribonucleotide + CO2 + diphosphate = quinolinate + 5-phospho-alpha-D-ribose 1-diphosphate + 2 H(+). It participates in cofactor biosynthesis; NAD(+) biosynthesis; nicotinate D-ribonucleotide from quinolinate: step 1/1. In terms of biological role, involved in the catabolism of quinolinic acid (QA). This chain is Nicotinate-nucleotide pyrophosphorylase [carboxylating] (QPRT), found in Bos taurus (Bovine).